We begin with the raw amino-acid sequence, 859 residues long: Homeobox-leucine zipper protein HOX32 (859 aa).

The disordered stretch occupies residues 7-31 (AAVHGVGRQDRSSPGGGGAPQVDTG). The homeobox DNA-binding region spans 29-92 (DTGKYVRYTP…NRRCREKQRK (64 aa)). Residues 100–129 (VNRKLTAMNKLLMEENDRLQKQVSRLVYEN) adopt a coiled-coil conformation. Over residues 146-164 (TSCESVVTSGQHHQQQNPA) the composition is skewed to polar residues. Positions 146-172 (TSCESVVTSGQHHQQQNPAATRPQRDA) are disordered. The START domain maps to 171 to 393 (DANNPAGLLA…LRHIRQIAHE (223 aa)).

Belongs to the HD-ZIP homeobox family. Class III subfamily. In terms of tissue distribution, expressed in seedlings, roots, stems, leaf sheaths and blades and panicles.

The protein resides in the nucleus. Functionally, probable transcription factor. This chain is Homeobox-leucine zipper protein HOX32 (HOX32), found in Oryza sativa subsp. japonica (Rice).